The sequence spans 336 residues: Thiamine thiazole synthase (336 aa).

Substrate is bound by residues Ala-89, 110–111 (ES), Gly-118, and Cys-183. A 2,3-didehydroalanine (Cys) modification is found at Cys-219. Substrate-binding positions include Asp-221, His-236, Met-288, and 298 to 300 (RMG).

It belongs to the THI4 family. Homooctamer. It depends on Fe cation as a cofactor. During the catalytic reaction, a sulfide is transferred from Cys-219 to a reaction intermediate, generating a dehydroalanine residue.

The protein localises to the cytoplasm. It localises to the nucleus. The enzyme catalyses [ADP-thiazole synthase]-L-cysteine + glycine + NAD(+) = [ADP-thiazole synthase]-dehydroalanine + ADP-5-ethyl-4-methylthiazole-2-carboxylate + nicotinamide + 3 H2O + 2 H(+). Functionally, involved in biosynthesis of the thiamine precursor thiazole. Catalyzes the conversion of NAD and glycine to adenosine diphosphate 5-(2-hydroxyethyl)-4-methylthiazole-2-carboxylic acid (ADT), an adenylated thiazole intermediate. The reaction includes an iron-dependent sulfide transfer from a conserved cysteine residue of the protein to a thiazole intermediate. The enzyme can only undergo a single turnover, which suggests it is a suicide enzyme. May have additional roles in adaptation to various stress conditions and in DNA damage tolerance. The polypeptide is Thiamine thiazole synthase (Puccinia graminis f. sp. tritici (strain CRL 75-36-700-3 / race SCCL) (Black stem rust fungus)).